The chain runs to 91 residues: Small integral membrane protein 12-A (91 aa).

A helical transmembrane segment spans residues 12-34; sequence YAPYITFPVAFVVGAVGYQLEWF.

The protein belongs to the SMIM12 family.

The protein resides in the membrane. This chain is Small integral membrane protein 12-A (smim12-a), found in Xenopus laevis (African clawed frog).